The following is a 78-amino-acid chain: Defensin-like protein 287 (78 aa).

The N-terminal stretch at 1 to 24 (MNNLRVIMSVLLAVLVFTATVSES) is a signal peptide. 3 cysteine pairs are disulfide-bonded: Cys-39–Cys-59, Cys-45–Cys-64, and Cys-51–Cys-66.

The protein belongs to the DEFL family.

Its subcellular location is the secreted. The protein is Defensin-like protein 287 of Arabidopsis thaliana (Mouse-ear cress).